The following is a 725-amino-acid chain: Probable dipeptidyl-peptidase 5 (725 aa).

An N-terminal signal peptide occupies residues 1–18; the sequence is MGALRWLSIAATASTALA. 6 N-linked (GlcNAc...) asparagine glycosylation sites follow: Asn-75, Asn-96, Asn-153, Asn-258, Asn-383, and Asn-453. Catalysis depends on Ser-563, which acts as the Charge relay system. Asn-610 carries an N-linked (GlcNAc...) asparagine glycan. Catalysis depends on charge relay system residues Asp-646 and His-678.

It belongs to the peptidase S9C family.

The protein resides in the secreted. Its function is as follows. Extracellular dipeptidyl-peptidase which removes N-terminal dipeptides sequentially from polypeptides having unsubstituted N-termini. This chain is Probable dipeptidyl-peptidase 5 (dpp5), found in Aspergillus flavus (strain ATCC 200026 / FGSC A1120 / IAM 13836 / NRRL 3357 / JCM 12722 / SRRC 167).